The following is a 277-amino-acid chain: Soluble NSF attachment protein 29 (277 aa).

Over residues 1 to 11 the composition is skewed to basic and acidic residues; the sequence is MSRNPFDDDYR. Disordered stretches follow at residues 1 to 30, 49 to 73, and 117 to 170; these read MSRN…MGHY, ESLD…STAQ, and KFTK…ESSR. Polar residues predominate over residues 14–28; it reads AASSTMPVKSYTTMG. Residues 44–106 enclose the t-SNARE coiled-coil homology 1 domain; the sequence is EKTLQESLDS…QMTQRNLNSL (63 aa). Residues 49-65 are compositionally biased toward basic and acidic residues; that stretch reads ESLDSTERSRRHLENSE. Over residues 134–170 the composition is skewed to polar residues; sequence SKSASRLSETATNLSSGGGSATFSGPSGQRTLTESSR. A t-SNARE coiled-coil homology 2 domain is found at 179–241; sequence EAMDNQIDEN…RDQDKQMQKI (63 aa).

The protein belongs to the SNAP-25 family.

Its subcellular location is the synapse. The protein localises to the synaptosome. SNAREs, soluble N-ethylmaleimide-sensitive factor-attachment protein receptors, are essential proteins for fusion of cellular membranes. SNAREs localized on opposing membranes assemble to form a trans-SNARE complex, an extended, parallel four alpha-helical bundle that drives membrane fusion. Plays a role in the processing and secretion of the aspartic protease hrg-7 from the intestine. The sequence is that of Soluble NSF attachment protein 29 from Caenorhabditis elegans.